Reading from the N-terminus, the 224-residue chain is Thymidine kinase (224 aa).

Residues 19–26 and 93–96 contribute to the ATP site; these read GPMFAGKT and DEVQ. Glu-94 functions as the Proton acceptor in the catalytic mechanism. Residues Cys-150, Cys-153, Cys-188, and His-191 each coordinate Zn(2+).

It belongs to the thymidine kinase family. In terms of assembly, homotetramer.

The protein localises to the cytoplasm. The enzyme catalyses thymidine + ATP = dTMP + ADP + H(+). The protein is Thymidine kinase of Mycoplasmoides gallisepticum (strain R(low / passage 15 / clone 2)) (Mycoplasma gallisepticum).